A 513-amino-acid polypeptide reads, in one-letter code: ATP synthase subunit alpha (513 aa).

An ATP-binding site is contributed by 169 to 176; sequence GDRQTGKT.

This sequence belongs to the ATPase alpha/beta chains family. As to quaternary structure, F-type ATPases have 2 components, CF(1) - the catalytic core - and CF(0) - the membrane proton channel. CF(1) has five subunits: alpha(3), beta(3), gamma(1), delta(1), epsilon(1). CF(0) has three main subunits: a(1), b(2) and c(9-12). The alpha and beta chains form an alternating ring which encloses part of the gamma chain. CF(1) is attached to CF(0) by a central stalk formed by the gamma and epsilon chains, while a peripheral stalk is formed by the delta and b chains.

Its subcellular location is the cell inner membrane. It carries out the reaction ATP + H2O + 4 H(+)(in) = ADP + phosphate + 5 H(+)(out). Functionally, produces ATP from ADP in the presence of a proton gradient across the membrane. The alpha chain is a regulatory subunit. The polypeptide is ATP synthase subunit alpha (Bordetella pertussis (strain Tohama I / ATCC BAA-589 / NCTC 13251)).